The following is a 483-amino-acid chain: GDP-fucose protein O-fucosyltransferase 3 (483 aa).

Residues 1-8 are Cytoplasmic-facing; the sequence is MVRIPRRK. The chain crosses the membrane as a helical; Signal-anchor for type II membrane protein span at residues 9 to 31; that stretch reads LLPSCLCMTATVFLMVTVQVLVE. Over 32–483 the chain is Lumenal; sequence LGKFERKKFK…FWALVFKDSF (452 aa). The segment at 45–64 is disordered; sequence LQDGQKDVEGDPKHLNPLPK. N-linked (GlcNAc...) asparagine glycosylation is found at Asn-110, Asn-168, and Asn-318. A disulfide bridge links Cys-389 with Cys-392. N-linked (GlcNAc...) asparagine glycosylation is present at Asn-468.

The protein belongs to the glycosyltransferase 10 family.

Its subcellular location is the endoplasmic reticulum membrane. The enzyme catalyses L-threonyl-[protein] + GDP-beta-L-fucose = 3-O-(alpha-L-fucosyl)-L-threonyl-[protein] + GDP + H(+). It carries out the reaction L-seryl-[protein] + GDP-beta-L-fucose = 3-O-(alpha-L-fucosyl)-L-seryl-[protein] + GDP + H(+). It participates in protein modification; protein glycosylation. In terms of biological role, protein O-fucosyltransferase that specifically catalyzes O-fucosylation of serine or threonine residues in EMI domains of target proteins, such as MMRN1, MMRN2 and EMID1. Attaches fucose through an O-glycosidic linkage. O-fucosylation of EMI domain-containing proteins may be required for facilitating protein folding and secretion. May also show alpha-(1,3)-fucosyltransferase activity toward the innermost N-acetyl glucosamine (GlcNAc) residue in biantennary N-glycan acceptors. However, this was tested with a library of synthetic substrates and this activity is unsure in vivo. May be involved in biosynthesis of Lewis X-carrying biantennary N-glycans that regulate neuron stem cell self-renewal during brain development. In Rattus norvegicus (Rat), this protein is GDP-fucose protein O-fucosyltransferase 3 (Fut10).